The primary structure comprises 276 residues: Digeranylgeranylglyceryl phosphate synthase (276 aa).

The next 7 helical transmembrane spans lie at 14-34, 40-60, 92-112, 146-166, 202-222, 224-244, and 256-276; these read NCIL…GHFP, LLIF…NDYF, FAVG…LGVI, GAVA…AFLV, VGVL…KASV, VGYY…YLIL, and QKLL…AAIV.

It belongs to the UbiA prenyltransferase family. DGGGP synthase subfamily. It depends on Mg(2+) as a cofactor.

It localises to the cell membrane. The catalysed reaction is sn-3-O-(geranylgeranyl)glycerol 1-phosphate + (2E,6E,10E)-geranylgeranyl diphosphate = 2,3-bis-O-(geranylgeranyl)-sn-glycerol 1-phosphate + diphosphate. It functions in the pathway membrane lipid metabolism; glycerophospholipid metabolism. Prenyltransferase that catalyzes the transfer of the geranylgeranyl moiety of geranylgeranyl diphosphate (GGPP) to the C2 hydroxyl of (S)-3-O-geranylgeranylglyceryl phosphate (GGGP). This reaction is the second ether-bond-formation step in the biosynthesis of archaeal membrane lipids. In Thermococcus onnurineus (strain NA1), this protein is Digeranylgeranylglyceryl phosphate synthase.